The chain runs to 659 residues: Acetyl-coenzyme A synthetase (659 aa).

The interval 1–35 is disordered; sequence MATEQTKGQSSESISSVLSERRKFPPPEAFSSQSH. CoA-binding positions include 205–208, Thr323, and Asn347; that span reads RRGS. Residues 399 to 401, 423 to 428, Asp512, and Arg527 each bind ATP; these read GEP and DTWWQT. Ser535 contributes to the CoA binding site. Residue Arg538 participates in ATP binding. Val549, His551, and Val554 together coordinate Mg(2+). Lys621 is modified (N6-acetyllysine).

It belongs to the ATP-dependent AMP-binding enzyme family. Mg(2+) serves as cofactor. Post-translationally, acetylated. Deacetylation by the SIR2-homolog deacetylase activates the enzyme.

It carries out the reaction acetate + ATP + CoA = acetyl-CoA + AMP + diphosphate. Its function is as follows. Catalyzes the conversion of acetate into acetyl-CoA (AcCoA), an essential intermediate at the junction of anabolic and catabolic pathways. AcsA undergoes a two-step reaction. In the first half reaction, AcsA combines acetate with ATP to form acetyl-adenylate (AcAMP) intermediate. In the second half reaction, it can then transfer the acetyl group from AcAMP to the sulfhydryl group of CoA, forming the product AcCoA. The protein is Acetyl-coenzyme A synthetase of Chlorobaculum tepidum (strain ATCC 49652 / DSM 12025 / NBRC 103806 / TLS) (Chlorobium tepidum).